The chain runs to 308 residues: Olfactory receptor 2D2 (308 aa).

Residues 1–25 (MRQINQTQVTEFLLLGLSDGPHTEQ) are Extracellular-facing. N-linked (GlcNAc...) asparagine glycosylation occurs at Asn5. The chain crosses the membrane as a helical span at residues 26-49 (LLFIVLLGVYLVTVLGNLLLISLV). Over 50–57 (HVDSQLHT) the chain is Cytoplasmic. A helical membrane pass occupies residues 58 to 79 (PMYFFLCNLSLADLCFSTNIVP). Over 80-100 (QALVHLLSRKKVIAFTLCAAR) the chain is Extracellular. A helical membrane pass occupies residues 101–120 (LLFFLIFGCTQCALLAVMSY). At 121–139 (DRYVAICNPLRYPNIMTWK) the chain is on the cytoplasmic side. A helical membrane pass occupies residues 140 to 158 (VCVQLATGSWTSGILVSVV). Over 159 to 195 (DTTFILRLPYRGSNSIAHFFCEAPALLILASTDTHAS) the chain is Extracellular. The helical transmembrane segment at 196–219 (EMAIFLMGVVILLIPVFLILVSYG) threads the bilayer. The Cytoplasmic portion of the chain corresponds to 220–236 (RIIVTVVKMKSTVGSLK). A helical transmembrane segment spans residues 237-259 (AFSTCGSHLMVVILFYGSAIITY). The Extracellular segment spans residues 260–270 (MTPKSSKQQEK). Residues 271–290 (SVSVFYAIVTPMLNPLIYSL) form a helical membrane-spanning segment. At 291 to 308 (RNKDVKAALRKVATRNFP) the chain is on the cytoplasmic side.

This sequence belongs to the G-protein coupled receptor 1 family.

The protein resides in the cell membrane. Functionally, odorant receptor. The polypeptide is Olfactory receptor 2D2 (OR2D2) (Homo sapiens (Human)).